Reading from the N-terminus, the 312-residue chain is Putative B3 domain-containing protein Os10g0537100 (312 aa).

Residues 35–153 (FEKVVTPSDV…RLFIDFRRRR (119 aa)) constitute a DNA-binding region (TF-B3). 2 disordered regions span residues 161–182 (FPPT…HPPL) and 286–312 (LLQL…DLGL). The segment covering 170-180 (HSHHHHQRHHP) has biased composition (basic residues). Over residues 286–301 (LLQLPSPSSSTSSSTA) the composition is skewed to low complexity.

It localises to the nucleus. In Oryza sativa subsp. japonica (Rice), this protein is Putative B3 domain-containing protein Os10g0537100.